Here is a 298-residue protein sequence, read N- to C-terminus: Lipoyl synthase (298 aa).

[4Fe-4S] cluster is bound by residues cysteine 40, cysteine 45, cysteine 51, cysteine 67, cysteine 71, cysteine 74, and serine 280. A Radical SAM core domain is found at 53–269 (AVRRTATFMI…KEIALSKGFS (217 aa)).

This sequence belongs to the radical SAM superfamily. Lipoyl synthase family. [4Fe-4S] cluster serves as cofactor.

It is found in the cytoplasm. It catalyses the reaction [[Fe-S] cluster scaffold protein carrying a second [4Fe-4S](2+) cluster] + N(6)-octanoyl-L-lysyl-[protein] + 2 oxidized [2Fe-2S]-[ferredoxin] + 2 S-adenosyl-L-methionine + 4 H(+) = [[Fe-S] cluster scaffold protein] + N(6)-[(R)-dihydrolipoyl]-L-lysyl-[protein] + 4 Fe(3+) + 2 hydrogen sulfide + 2 5'-deoxyadenosine + 2 L-methionine + 2 reduced [2Fe-2S]-[ferredoxin]. Its pathway is protein modification; protein lipoylation via endogenous pathway; protein N(6)-(lipoyl)lysine from octanoyl-[acyl-carrier-protein]. Catalyzes the radical-mediated insertion of two sulfur atoms into the C-6 and C-8 positions of the octanoyl moiety bound to the lipoyl domains of lipoate-dependent enzymes, thereby converting the octanoylated domains into lipoylated derivatives. This is Lipoyl synthase from Geobacillus thermodenitrificans (strain NG80-2).